The sequence spans 90 residues: DNA-directed RNA polymerase subunit omega (90 aa).

This sequence belongs to the RNA polymerase subunit omega family. As to quaternary structure, the RNAP catalytic core consists of 2 alpha, 1 beta, 1 beta' and 1 omega subunit. When a sigma factor is associated with the core the holoenzyme is formed, which can initiate transcription.

The enzyme catalyses RNA(n) + a ribonucleoside 5'-triphosphate = RNA(n+1) + diphosphate. Promotes RNA polymerase assembly. Latches the N- and C-terminal regions of the beta' subunit thereby facilitating its interaction with the beta and alpha subunits. This chain is DNA-directed RNA polymerase subunit omega, found in Beutenbergia cavernae (strain ATCC BAA-8 / DSM 12333 / CCUG 43141 / JCM 11478 / NBRC 16432 / NCIMB 13614 / HKI 0122).